The primary structure comprises 152 residues: Nucleoside diphosphate kinase A (152 aa).

4 residues coordinate ATP: Lys12, Phe60, Arg88, and Thr94. A Glycyl lysine isopeptide (Lys-Gly) (interchain with G-Cter in ubiquitin) cross-link involves residue Lys100. Arg105 and Asn115 together coordinate ATP. The active-site Pros-phosphohistidine intermediate is His118. Phosphoserine is present on residues Ser120, Ser122, and Ser125.

The protein belongs to the NDK family. In terms of assembly, hexamer of two different chains: An and B (A6, A5B, A4B2, A3B3, A2B4, AB5, B6). Interacts with PRUNE1. Component of the SET complex, composed of at least ANP32A, APEX1, HMGB2, NME1, SET and TREX1. Within this complex, interacts directly with SET. Also interacts with TREX1, but only following translocation to the nucleus. The cofactor is Mg(2+).

It is found in the cytoplasm. It localises to the nucleus. The enzyme catalyses a 2'-deoxyribonucleoside 5'-diphosphate + ATP = a 2'-deoxyribonucleoside 5'-triphosphate + ADP. The catalysed reaction is a ribonucleoside 5'-diphosphate + ATP = a ribonucleoside 5'-triphosphate + ADP. Its activity is regulated as follows. Autophosphorylation at His-118 increases serine/threonine protein kinase activity of the enzyme. Interaction with the SET complex inhibits exonuclease activity. Its function is as follows. Major role in the synthesis of nucleoside triphosphates other than ATP. The ATP gamma phosphate is transferred to the NDP beta phosphate via a ping-pong mechanism, using a phosphorylated active-site intermediate. Possesses nucleoside-diphosphate kinase, serine/threonine-specific protein kinase, geranyl and farnesyl pyrophosphate kinase, histidine protein kinase and 3'-5' exonuclease activities. Involved in cell proliferation, differentiation and development, signal transduction, G protein-coupled receptor endocytosis, and gene expression. Required for neural development including neural patterning and cell fate determination. During GZMA-mediated cell death, works in concert with TREX1. NME1 nicks one strand of DNA and TREX1 removes bases from the free 3' end to enhance DNA damage and prevent DNA end reannealing and rapid repair. The protein is Nucleoside diphosphate kinase A (Nme1) of Rattus norvegicus (Rat).